We begin with the raw amino-acid sequence, 457 residues long: Guanine nucleotide-binding protein subunit alpha homolog (457 aa).

Residues 131–457 form the G-alpha domain; the sequence is RQVKLLLLGA…QRNLNALMLQ (327 aa). A G1 motif region spans residues 134–147; sequence KLLLLGAGESGKST. GTP-binding positions include 139–146, 274–280, 299–303, 369–372, and Ala-429; these read GAGESGKS, LHCRKAT, DVGGQ, and NKTD. Ser-146 and Thr-280 together coordinate Mg(2+). The interval 272-280 is G2 motif; sequence DILHCRKAT. Residues 295–304 are G3 motif; the sequence is FVFVDVGGQR. The interval 365–372 is G4 motif; sequence ILFLNKTD. A G5 motif region spans residues 427 to 432; the sequence is TTAIDT.

The protein belongs to the G-alpha family. G(12) subfamily. As to quaternary structure, g proteins are composed of 3 units; alpha, beta and gamma. The alpha chain contains the guanine nucleotide binding site. In terms of tissue distribution, in ovary, expressed in nurse cells and oocyte. In early embryos, distributed uniformly. At the extended germband stage, accumulates in the mesoderm.

The protein resides in the cytoplasm. Its function is as follows. May play a role in a signal transduction pathway used during gastrulation. Required specifically for the ventral furrow and posterior midgut invaginations, where it is necessary for coordinating cell shape changes. Functionally, guanine nucleotide-binding proteins (G proteins) are involved as modulators or transducers in various transmembrane signaling systems. The polypeptide is Guanine nucleotide-binding protein subunit alpha homolog (cta) (Drosophila melanogaster (Fruit fly)).